Reading from the N-terminus, the 242-residue chain is Probable transcriptional regulatory protein HEAR0561 (242 aa).

It belongs to the TACO1 family.

It is found in the cytoplasm. This is Probable transcriptional regulatory protein HEAR0561 from Herminiimonas arsenicoxydans.